A 942-amino-acid chain; its full sequence is Chitin synthase 2 (942 aa).

Positions 1–13 (MAYHYSHDSDRRQ) are enriched in basic and acidic residues. The tract at residues 1 to 132 (MAYHYSHDSD…PSHTDYSDED (132 aa)) is disordered. The segment covering 18 to 33 (YNYPSNYSNPSQYSIP) has biased composition (low complexity). Asn23 is a glycosylation site (N-linked (GlcNAc...) asparagine). Positions 71–80 (PQPTASSMTS) are enriched in polar residues. N-linked (GlcNAc...) asparagine glycosylation is present at Asn587. The next 4 membrane-spanning stretches (helical) occupy residues 590-610 (IFAATYAMVCFWRIWTSGHGI), 625-645 (FNLLFNWLSVSSFYLAFFFLI), 663-683 (IFQVFNKVYIALIFVVLVCSL), and 696-716 (FCIFMFAVCQGILLYCAGWTV). Asn736 carries an N-linked (GlcNAc...) asparagine glycan. Transmembrane regions (helical) follow at residues 739–759 (FVQLALSLMATYGLYLISSLL) and 770–790 (FVQYLLLLPSYVNILLIYAMC). Asn803 carries N-linked (GlcNAc...) asparagine glycosylation. Transmembrane regions (helical) follow at residues 873-893 (VVLLFLGSNMLIILLFTSSTF) and 916-936 (IFYAVLGLSALRFAGCLLYLI).

It belongs to the chitin synthase family. Class III subfamily.

Its subcellular location is the cell membrane. It carries out the reaction [(1-&gt;4)-N-acetyl-beta-D-glucosaminyl](n) + UDP-N-acetyl-alpha-D-glucosamine = [(1-&gt;4)-N-acetyl-beta-D-glucosaminyl](n+1) + UDP + H(+). Functionally, polymerizes chitin, a structural polymer of the cell wall and septum, by transferring the sugar moiety of UDP-GlcNAc to the non-reducing end of the growing chitin polymer. The chain is Chitin synthase 2 from Cryptococcus neoformans var. grubii serotype A (strain H99 / ATCC 208821 / CBS 10515 / FGSC 9487) (Filobasidiella neoformans var. grubii).